We begin with the raw amino-acid sequence, 611 residues long: MPEVVDTCSLASPASVCQTKHLHLRCSIDFTRRVLSGTAALTIQSQEDNLRSLILDTKDLTIEKVVINGQEVKYTLGERQSYKGSPIEISLPIALCKNQEIVIEISFETSPKSSALQWLTPEQTSGKEHPYLFSQCQAIHCRAILPCQDTPSVKLTYSAEVSVPKELVALMSAIRDGEAPDPEDPNRKIYRFSQKVPIPCYLIALVVGALESRQIGPRTLVWSEKEQVEKSAYEFSETESMLKIAEDLGGPYIWGQYDLLVLPPSFPYGGMENPCLTFVTPTLLAGDKSLSNVIAHEISHSWTGNLVTNKTWDHFWLNEGHTVYLERHICGRLFGEKFRHFHALGGWGELQNSIKTFGETHPFTKLVVDLTNTDPDVAYSSVPYEKGFALLFYLEQLLGGPEVFLGFLKAYVEKFSYKSITTDNWKDFLYSHFKDKVDILNQVDWNTWLYSPGLPPVKPNYDMTLTNACISLSQRWITAKDDDLNSFSSADLKDFSSHQVNEFLAQMLQNAPLPLGHIKRMQEVYNFNAINNSEIRFRWLRLCIQSKWEEAIPLALKMATEQGRMKFTRPLFKDLAAFDKSHDQAIRTYKEHKASMHPVTAMLVGKDLKVD.

K73 carries the N6-acetyllysine modification. A peptide contacts are provided by residues 135-137 (QCQ) and 267-272 (PYGGME). H296 contacts Zn(2+). Catalysis depends on E297, which acts as the Proton acceptor. Residues H300 and E319 each contribute to the Zn(2+) site. K337 is modified (N6-acetyllysine). The Proton donor role is filled by Y384. K414 is modified (N6-acetyllysine). Phosphoserine is present on S416. 564 to 566 (RMK) is an a peptide binding site. N6-acetyllysine is present on K573.

This sequence belongs to the peptidase M1 family. As to quaternary structure, monomer. Zn(2+) serves as cofactor. Post-translationally, phosphorylation at Ser-416 inhibits leukotriene-A4 hydrolase activity. activity.

The protein resides in the cytoplasm. The enzyme catalyses leukotriene A4 + H2O = leukotriene B4. It carries out the reaction (5S,6S)-epoxy-(18R)-hydroxy-(7E,9E,11Z,14Z,16E)-eicosapentaenoate + H2O = resolvin E1. It catalyses the reaction (5S,6S)-epoxy-(18S)-hydroxy-(7E,9E,11Z,14Z,16E)-eicosapentaenoate + H2O = 18S-resolvin E1. The catalysed reaction is Release of the N-terminal residue from a tripeptide.. Its pathway is lipid metabolism; leukotriene B4 biosynthesis. Inhibited by bestatin. The epoxide hydrolase activity is restrained by suicide inactivation that involves binding of LTA4 to Tyr-379. 4-(4-benzylphenyl)thiazol-2-amine (ARM1) selectively inhibits the epoxide hydrolase activity. Functionally, bifunctional zinc metalloenzyme that comprises both epoxide hydrolase (EH) and aminopeptidase activities. Acts as an epoxide hydrolase to catalyze the conversion of LTA4 to the pro-inflammatory mediator leukotriene B4 (LTB4). Also has aminopeptidase activity, with high affinity for N-terminal arginines of various synthetic tripeptides. In addition to its pro-inflammatory EH activity, may also counteract inflammation by its aminopeptidase activity, which inactivates by cleavage another neutrophil attractant, the tripeptide Pro-Gly-Pro (PGP), a bioactive fragment of collagen generated by the action of matrix metalloproteinase-9 (MMP9) and prolylendopeptidase (PREPL). Involved also in the biosynthesis of resolvin E1 and 18S-resolvin E1 from eicosapentaenoic acid, two lipid mediators that show potent anti-inflammatory and pro-resolving actions. The sequence is that of Leukotriene A-4 hydrolase (LTA4H) from Bos taurus (Bovine).